The chain runs to 338 residues: Nicotinate-nucleotide--dimethylbenzimidazole phosphoribosyltransferase (338 aa).

Glutamate 305 (proton acceptor) is an active-site residue.

The protein belongs to the CobT family. As to quaternary structure, homodimer.

The enzyme catalyses 5,6-dimethylbenzimidazole + nicotinate beta-D-ribonucleotide = alpha-ribazole 5'-phosphate + nicotinate + H(+). It functions in the pathway nucleoside biosynthesis; alpha-ribazole biosynthesis; alpha-ribazole from 5,6-dimethylbenzimidazole: step 1/2. In terms of biological role, catalyzes the synthesis of alpha-ribazole-5'-phosphate from nicotinate mononucleotide (NAMN) and 5,6-dimethylbenzimidazole (DMB). This Sinorhizobium sp protein is Nicotinate-nucleotide--dimethylbenzimidazole phosphoribosyltransferase (cobU).